The sequence spans 418 residues: uncharacterized protein (418 aa).

Residues 1 to 24 (MSGTAGFITVSPGPPTEAPGGFPR) are disordered.

This sequence to A.pernix APE_1276 and S.solfataricus SSO2105.

This is an uncharacterized protein from Aeropyrum pernix (strain ATCC 700893 / DSM 11879 / JCM 9820 / NBRC 100138 / K1).